A 760-amino-acid chain; its full sequence is Sphingosine kinase B (760 aa).

The interval 1 to 108 (MENNNNEPAE…NNNNNEPVTS (108 aa)) is disordered. Residues 12-39 (VQEKGPKLKNDIDLNDQFKDEKEKKEEI) are compositionally biased toward basic and acidic residues. Low complexity predominate over residues 40 to 106 (SSSSIENKNN…NNNNNNNEPV (67 aa)). One can recognise a DAGKc domain in the interval 247 to 383 (PKNRKIRILI…LDVCIVQQPT (137 aa)). ATP is bound by residues 257 to 259 (NPK) and threonine 288. 313–316 (SGDG) is a binding site for substrate. Catalysis depends on aspartate 315, which acts as the Proton donor/acceptor. ATP contacts are provided by residues glutamate 320 and 345–347 (GTG). Positions 394 to 438 (TVTTTTTTTSPTSASPTITSANNNNNNNNNNNNNNNNNNNNNNNN) are disordered. Aspartate 461 provides a ligand contact to substrate. ATP contacts are provided by arginine 468 and arginine 474. The disordered stretch occupies residues 535–605 (DNDNNNKNKN…SSPRSDINMS (71 aa)). The span at 549–597 (EINSTTSNNNNNNNTTTTSTSSSTSTSTSTSSLTATTTTAKSTNSLSSS) shows a compositional bias: low complexity. An ATP-binding site is contributed by 734–736 (DGE).

The enzyme catalyses a sphingoid base + ATP = a sphingoid 1-phosphate + ADP + H(+). Inhibited by N,N,-dimethylsphingosine. Its function is as follows. Catalyzes the phosphorylation of sphingosine to form sphingosine-1-phosphate (S1P), which probably acts intracellularly as a second messenger perhaps by promoting cell proliferation. This Dictyostelium discoideum (Social amoeba) protein is Sphingosine kinase B (sgkB).